Consider the following 597-residue polypeptide: Blastula protease 10 (597 aa).

Positions 1 to 16 (MKLILFLSGLVSLVLC) are cleaved as a signal peptide. The propeptide at 17–93 (TLAAPTGDQK…DEMTGRKKRK (77 aa)) is activation peptide. The tract at residues 24-67 (DQKEIHTETPPPKKPSETTTPGALKTPQPEPKDEEPTPGAFQGD) is disordered. The Peptidase M12A domain maps to 93-294 (KATIYESQRW…ELANLIYECD (202 aa)). Cystine bridges form between Cys-134–Cys-293, Cys-162–Cys-182, Cys-299–Cys-315, Cys-305–Cys-317, Cys-319–Cys-328, Cys-339–Cys-365, Cys-392–Cys-412, Cys-484–Cys-510, and Cys-537–Cys-557. His-190 contributes to the Zn(2+) binding site. The active site involves Glu-191. Residues His-194 and His-200 each contribute to the Zn(2+) site. An EGF-like domain is found at 295-329 (DIEDCAGANECLNGGYHDTECNCVCPSGYNGDLCE). CUB domains follow at residues 339–449 (CSER…YRIV) and 484–595 (CGGS…YRAI).

Requires Zn(2+) as cofactor.

It localises to the cytoplasm. The protein localises to the perinuclear region. It is found in the cell cortex. The protein resides in the secreted. Its subcellular location is the extracellular space. Functionally, could be involved in the differentiation of ectodermal lineages and subsequent patterning of the embryo. The sequence is that of Blastula protease 10 (BP10) from Paracentrotus lividus (Common sea urchin).